Here is a 188-residue protein sequence, read N- to C-terminus: Apolipophorin-3 (188 aa).

The signal sequence occupies residues 1–17 (MVAKLFVLVACIALSHA). A propeptide spanning residues 18–22 (AMVRR) is cleaved from the precursor.

The protein belongs to the insect apolipophorin-3 family. As to quaternary structure, equilibrium between a soluble monomer and a bound lipoprotein form. Apolipophorin-3 associates with lipophorin during lipid loading until each particle contains 9 or 14 molecules of apolipophorin-3. Expressed in fat body and secreted in hemolymph. Also expressed in ovary and testis at lower levels.

Its subcellular location is the secreted. Assists in the loading of diacylglycerol, generated from triacylglycerol stores in the fat body through the action of adipokinetic hormone, into lipophorin, the hemolymph lipoprotein. It increases the lipid carrying capacity of lipophorin by covering the expanding hydrophobic surface resulting from diacylglycerol uptake. It thus plays a critical role in the transport of lipids during flight in several species of insects. The polypeptide is Apolipophorin-3 (Spodoptera litura (Asian cotton leafworm)).